Reading from the N-terminus, the 231-residue chain is tRNA (guanine-N(7)-)-methyltransferase (231 aa).

4 residues coordinate S-adenosyl-L-methionine: Glu62, Glu87, Asp114, and Asp136. The active site involves Asp136. Substrate is bound by residues Lys140, Asp172, and 210 to 213 (TRYE).

It belongs to the class I-like SAM-binding methyltransferase superfamily. TrmB family.

It catalyses the reaction guanosine(46) in tRNA + S-adenosyl-L-methionine = N(7)-methylguanosine(46) in tRNA + S-adenosyl-L-homocysteine. It functions in the pathway tRNA modification; N(7)-methylguanine-tRNA biosynthesis. Catalyzes the formation of N(7)-methylguanine at position 46 (m7G46) in tRNA. This chain is tRNA (guanine-N(7)-)-methyltransferase, found in Zymomonas mobilis subsp. mobilis (strain ATCC 31821 / ZM4 / CP4).